Here is a 179-residue protein sequence, read N- to C-terminus: Ubiquitin-conjugating enzyme E2 C (179 aa).

The tract at residues 1-31 (MASQNVDPAAASSVASRKGQESGTSAARGSV) is disordered. A UBC core domain is found at 30–179 (SVGKRLQQEL…YQKQVREKEI (150 aa)). Catalysis depends on C114, which acts as the Glycyl thioester intermediate.

Belongs to the ubiquitin-conjugating enzyme family. In terms of assembly, component of the APC/C complex. In terms of processing, autoubiquitinated by the APC/C complex, leading to its degradation by the proteasome.

The catalysed reaction is S-ubiquitinyl-[E1 ubiquitin-activating enzyme]-L-cysteine + [E2 ubiquitin-conjugating enzyme]-L-cysteine = [E1 ubiquitin-activating enzyme]-L-cysteine + S-ubiquitinyl-[E2 ubiquitin-conjugating enzyme]-L-cysteine.. It carries out the reaction S-ubiquitinyl-[E1 ubiquitin-activating enzyme]-L-cysteine + [acceptor protein]-L-lysine = [E1 ubiquitin-activating enzyme]-L-cysteine + N(6)-monoubiquitinyl-[acceptor protein]-L-lysine.. It participates in protein modification; protein ubiquitination. Functionally, catalyzes the covalent attachment of ubiquitin to other proteins. Acts as an essential factor of the anaphase promoting complex/cyclosome (APC/C), a cell cycle-regulated ubiquitin ligase that controls progression through mitosis. Acts by initiating 'Lys-11'-linked polyubiquitin chains on APC/C substrates, leading to the degradation of APC/C substrates by the proteasome and promoting mitotic exit. This Xenopus laevis (African clawed frog) protein is Ubiquitin-conjugating enzyme E2 C (ube2c).